The primary structure comprises 417 residues: Methyltransferase/ribosomally synthesized cyclic peptide omphalotin A precursor ophMA (417 aa).

Residues 1-251 (METSTQTKAG…GVSTFYIPPK (251 aa)) are methyltransferase domain. Active-site residues include arginine 72, tyrosine 76, and tyrosine 98. S-adenosyl-L-methionine contacts are provided by tyrosine 98, histidine 100, valine 103, alanine 130, glutamine 172, alanine 213, serine 244, and threonine 245. The interval 252–378 (ARKASNLDII…WAIRCAMKNM (127 aa)) is clasp domain. The precursor leader stretch occupies residues 379–399 (PSSLLDAARESGEEASQNGFP). 3 positions are modified to N-methylvaline: valine 401, valine 403, and valine 404. Residue glycine 405 is modified to N-methylglycine. The residue at position 406 (valine 406) is an N-methylvaline. Isoleucine 407 carries the post-translational modification N-methylisoleucine. Glycine 408 carries the post-translational modification N-methylglycine. Isoleucine 410 is modified (N-methylisoleucine). Glycine 411 bears the N-methylglycine mark. Valine 413 bears the N-methylvaline mark.

In the N-terminal section; belongs to the precorrin methyltransferase family. Homodimer. OphMA automethylates at Val-401, Val-403, Val-404, Gly-405, Val-406, Ile-407, Gly-408, Ile-410, Gly-411 and Val-413 before being processed by the prolyloligopeptidase ophP which likely forms a peptidyl ester upon removal of the follower propeptide, which then undergoes macrocyclization with the N-terminus of the modified core peptide. Peptide backbone alpha-N-methylations change the physicochemical properties of amide bonds to provide structural constraints and other favorable characteristics including biological membrane permeability to peptides.

It participates in mycotoxin biosynthesis. In terms of biological role, fusion protein of the methyltransferase ophM and the omphalotin core peptide; part of the gene cluster that mediates the biosynthesis of omphalotin A, a highly methylated cyclic dodecapeptide with nematodicidal activity. Omphalotin A derives from the C-terminus of the ophMA protein, and it is the ophMA protein that methylates its own C-terminus using S-adenosyl methionine (SAM). The C-terminus is subsequently cleaved off and macrocyclized by the prolyloligopeptidase ophP to give the final product. In Omphalotus olearius (Jack o'lantern), this protein is Methyltransferase/ribosomally synthesized cyclic peptide omphalotin A precursor ophMA.